A 191-amino-acid polypeptide reads, in one-letter code: Xanthine phosphoribosyltransferase (191 aa).

Leu-20 and Asn-27 together coordinate xanthine. 128–132 (ANGQA) provides a ligand contact to 5-phospho-alpha-D-ribose 1-diphosphate. Xanthine is bound at residue Lys-156.

Belongs to the purine/pyrimidine phosphoribosyltransferase family. Xpt subfamily. In terms of assembly, homodimer.

Its subcellular location is the cytoplasm. It catalyses the reaction XMP + diphosphate = xanthine + 5-phospho-alpha-D-ribose 1-diphosphate. The protein operates within purine metabolism; XMP biosynthesis via salvage pathway; XMP from xanthine: step 1/1. In terms of biological role, converts the preformed base xanthine, a product of nucleic acid breakdown, to xanthosine 5'-monophosphate (XMP), so it can be reused for RNA or DNA synthesis. The protein is Xanthine phosphoribosyltransferase of Limosilactobacillus reuteri (strain DSM 20016) (Lactobacillus reuteri).